The following is a 421-amino-acid chain: Tyrosine--tRNA ligase (421 aa).

L-tyrosine is bound at residue Tyr-38. Residues 43–52 (PTGDSLHIGH) carry the 'HIGH' region motif. Positions 169 and 173 each coordinate L-tyrosine. The 'KMSKS' region signature appears at 231–235 (KFGKS). Lys-234 contributes to the ATP binding site. In terms of domain architecture, S4 RNA-binding spans 353–419 (KNLVDFLVDT…GKKKYTLVHI (67 aa)).

Belongs to the class-I aminoacyl-tRNA synthetase family. TyrS type 1 subfamily. Homodimer.

The protein localises to the cytoplasm. The catalysed reaction is tRNA(Tyr) + L-tyrosine + ATP = L-tyrosyl-tRNA(Tyr) + AMP + diphosphate + H(+). Functionally, catalyzes the attachment of tyrosine to tRNA(Tyr) in a two-step reaction: tyrosine is first activated by ATP to form Tyr-AMP and then transferred to the acceptor end of tRNA(Tyr). The sequence is that of Tyrosine--tRNA ligase from Lactobacillus delbrueckii subsp. bulgaricus (strain ATCC BAA-365 / Lb-18).